The sequence spans 2477 residues: Spectrin alpha chain, non-erythrocytic 1 (2477 aa).

The segment at 1–14 (MDPSGVKVLETAED) is N-terminal domain. Spectrin repeat units follow at residues 45-146 (RFQF…VKLL), 150-251 (KLVQ…QGKL), 256-358 (EVQR…ARLN), 361-465 (YRLQ…QYEQ), 468-570 (DLQL…AQLA), 574-676 (HLQQ…KLRE), 679-781 (QQQQ…QKLA), 785-888 (RLQQ…DLED), 891-969 (QAQQ…ETGK), and 1096-1162 (LFRE…SEGL). The SH3 domain maps to 967–1026 (TGKELVLALYDYQEKSPREVTMKKGDILTLLNSTNKDWWKVEVNDRQGFVPAAYVKKLDP). Tyr-1176 carries the post-translational modification Phosphotyrosine. 10 Spectrin repeats span residues 1234 to 1336 (EVQR…EKLG), 1339 to 1442 (HDLQ…MMLD), 1446 to 1549 (ELQL…KLGE), 1552 to 1661 (TLQQ…KLKE), 1664 to 1767 (KQQN…KLNE), 1769 to 1873 (HRLH…RLEE), 1876 to 1979 (EYQQ…KLDE), 1983 to 2086 (FLQF…KLLE), 2097 to 2199 (LFLT…LELQ), and 2211 to 2315 (LRQE…NLEQ). Residues 2257–2477 (HQEIRAMRSQ…IEFTRSLFVN (221 aa)) form a C-terminal domain region. EF-hand domains lie at 2328 to 2363 (EALK…LGYD), 2371 to 2406 (EPDP…RETE), and 2409 to 2444 (KSSE…EQAD). Asp-2341, Asp-2343, Ser-2345, Arg-2347, Glu-2352, Asp-2384, Asn-2386, Asp-2388, His-2390, and Glu-2395 together coordinate Ca(2+).

The protein belongs to the spectrin family. In terms of assembly, like erythrocyte spectrin, the spectrin-like proteins are capable of forming dimers which can further associate to tetramers. Interacts with ACP1. Post-translationally, phosphorylation of Tyr-1176 decreases sensitivity to cleavage by calpain in vitro.

The protein localises to the cytoplasm. It is found in the cytoskeleton. Its subcellular location is the cell cortex. Its function is as follows. Morphologically, spectrin-like proteins appear to be related to spectrin, showing a flexible rod-like structure. They can bind actin but seem to differ in their calmodulin-binding activity. In nonerythroid tissues, spectrins, in association with some other proteins, may play an important role in membrane organization. This chain is Spectrin alpha chain, non-erythrocytic 1 (SPTAN1), found in Gallus gallus (Chicken).